The sequence spans 254 residues: Ubiquinone/menaquinone biosynthesis C-methyltransferase UbiE (254 aa).

S-adenosyl-L-methionine is bound by residues Thr77, Asp98, 126–127 (DA), and Ser143.

Belongs to the class I-like SAM-binding methyltransferase superfamily. MenG/UbiE family.

The enzyme catalyses a 2-demethylmenaquinol + S-adenosyl-L-methionine = a menaquinol + S-adenosyl-L-homocysteine + H(+). The catalysed reaction is a 2-methoxy-6-(all-trans-polyprenyl)benzene-1,4-diol + S-adenosyl-L-methionine = a 5-methoxy-2-methyl-3-(all-trans-polyprenyl)benzene-1,4-diol + S-adenosyl-L-homocysteine + H(+). It functions in the pathway quinol/quinone metabolism; menaquinone biosynthesis; menaquinol from 1,4-dihydroxy-2-naphthoate: step 2/2. It participates in cofactor biosynthesis; ubiquinone biosynthesis. Functionally, methyltransferase required for the conversion of demethylmenaquinol (DMKH2) to menaquinol (MKH2) and the conversion of 2-polyprenyl-6-methoxy-1,4-benzoquinol (DDMQH2) to 2-polyprenyl-3-methyl-6-methoxy-1,4-benzoquinol (DMQH2). The sequence is that of Ubiquinone/menaquinone biosynthesis C-methyltransferase UbiE from Blochmanniella pennsylvanica (strain BPEN).